The following is a 126-amino-acid chain: Fluoride-specific ion channel FluC (126 aa).

4 consecutive transmembrane segments (helical) span residues V6 to A26, T32 to I52, L68 to G90, and L102 to A122. Na(+)-binding residues include G76 and T79.

This sequence belongs to the fluoride channel Fluc/FEX (TC 1.A.43) family.

Its subcellular location is the cell inner membrane. The catalysed reaction is fluoride(in) = fluoride(out). Na(+) is not transported, but it plays an essential structural role and its presence is essential for fluoride channel function. In terms of biological role, fluoride-specific ion channel. Important for reducing fluoride concentration in the cell, thus reducing its toxicity. This Chlorobaculum tepidum (strain ATCC 49652 / DSM 12025 / NBRC 103806 / TLS) (Chlorobium tepidum) protein is Fluoride-specific ion channel FluC.